A 616-amino-acid polypeptide reads, in one-letter code: Dihydroxy-acid dehydratase (616 aa).

Asp81 lines the Mg(2+) pocket. [2Fe-2S] cluster is bound at residue Cys122. Mg(2+) is bound by residues Asp123 and Lys124. An N6-carboxylysine modification is found at Lys124. [2Fe-2S] cluster is bound at residue Cys195. Glu491 is a binding site for Mg(2+). Catalysis depends on Ser517, which acts as the Proton acceptor.

Belongs to the IlvD/Edd family. Homodimer. It depends on [2Fe-2S] cluster as a cofactor. Mg(2+) is required as a cofactor.

The enzyme catalyses (2R)-2,3-dihydroxy-3-methylbutanoate = 3-methyl-2-oxobutanoate + H2O. It carries out the reaction (2R,3R)-2,3-dihydroxy-3-methylpentanoate = (S)-3-methyl-2-oxopentanoate + H2O. Its pathway is amino-acid biosynthesis; L-isoleucine biosynthesis; L-isoleucine from 2-oxobutanoate: step 3/4. It participates in amino-acid biosynthesis; L-valine biosynthesis; L-valine from pyruvate: step 3/4. In terms of biological role, functions in the biosynthesis of branched-chain amino acids. Catalyzes the dehydration of (2R,3R)-2,3-dihydroxy-3-methylpentanoate (2,3-dihydroxy-3-methylvalerate) into 2-oxo-3-methylpentanoate (2-oxo-3-methylvalerate) and of (2R)-2,3-dihydroxy-3-methylbutanoate (2,3-dihydroxyisovalerate) into 2-oxo-3-methylbutanoate (2-oxoisovalerate), the penultimate precursor to L-isoleucine and L-valine, respectively. The sequence is that of Dihydroxy-acid dehydratase from Escherichia coli O17:K52:H18 (strain UMN026 / ExPEC).